A 116-amino-acid chain; its full sequence is Neuropeptide Y receptor type 1 (116 aa).

The helical transmembrane segment at Leu1–Val6 threads the bilayer. Topologically, residues Glu7 to His24 are cytoplasmic. Residues Ala25 to Ile45 traverse the membrane as a helical segment. The Extracellular segment spans residues Tyr46–Tyr81. The N-linked (GlcNAc...) asparagine glycan is linked to Asn56. A helical transmembrane segment spans residues Thr82–Phe102. At Lys103–Asp116 the chain is on the cytoplasmic side.

The protein belongs to the G-protein coupled receptor 1 family.

The protein localises to the cell membrane. Its function is as follows. Receptor for neuropeptide Y and peptide YY. This Ovis aries (Sheep) protein is Neuropeptide Y receptor type 1 (NPY1R).